We begin with the raw amino-acid sequence, 159 residues long: Small ribosomal subunit protein uS19 (159 aa).

This sequence belongs to the universal ribosomal protein uS19 family.

Its function is as follows. Protein S19 forms a complex with S13 that binds strongly to the 16S ribosomal RNA. The polypeptide is Small ribosomal subunit protein uS19 (Pyrobaculum arsenaticum (strain DSM 13514 / JCM 11321 / PZ6)).